A 629-amino-acid polypeptide reads, in one-letter code: Kelch-like protein 8 (629 aa).

The segment covering 1-10 (MASESTNGKQ) has biased composition (polar residues). Residues 1-40 (MASESTNGKQARSHVTKGRRQYQHQHQQQQQQQQQVRSRS) form a disordered region. The residue at position 2 (Ala2) is an N-acetylalanine. The segment covering 11-23 (ARSHVTKGRRQYQ) has biased composition (basic residues). The segment covering 24–35 (HQHQQQQQQQQQ) has biased composition (low complexity). The region spanning 76 to 143 (CDVTLKVGSK…VYSSRLTLTV (68 aa)) is the BTB domain. A BACK domain is found at 178-279 (CLAVRAFAES…LPVDFLMGVV (102 aa)). Kelch repeat units lie at residues 328-375 (VLFC…SVEG), 376-422 (KVYA…SLGG), 424-469 (IYAI…ALIN), 471-516 (VYAV…ELHG), 517-563 (CLYV…TVMG), and 565-610 (IFAV…VCDC).

In terms of assembly, component of the BCR(KLHL8) E3 ubiquitin ligase complex, at least composed of CUL3, KLHL8 and RBX1. Interacts with RAPSN.

The protein operates within protein modification; protein ubiquitination. In terms of biological role, substrate-specific adapter of a BCR (BTB-CUL3-RBX1) E3 ubiquitin ligase complex required for The BCR(KLHL8) ubiquitin ligase complex mediates ubiquitination and degradation of RAPSN. The chain is Kelch-like protein 8 (Klhl8) from Mus musculus (Mouse).